Here is a 279-residue protein sequence, read N- to C-terminus: Prostatic spermine-binding protein (279 aa).

The N-terminal stretch at 1-17 is a signal peptide; that stretch reads MLLLVTLALLAGPTCRA. Glutamine 18 is subject to Pyrrolidone carboxylic acid. The Jacalin-type lectin domain maps to 18-151; the sequence is QNILGNNVGT…LNGMGFKWKN (134 aa). Residue asparagine 62 is glycosylated (N-linked (GlcNAc...) asparagine). 2 stretches are compositionally biased toward acidic residues: residues 160–177 and 185–279; these read DDDK…NEED and NDHD…EEEE. The tract at residues 160 to 279 is disordered; that stretch reads DDDKEDDDDE…DDDNGDEEEE (120 aa).

It to mouse SBP. In terms of tissue distribution, prostate.

Its function is as follows. Spermine-binding protein is an androgen regulated ventral prostate glycoprotein that binds various polyamines. The chain is Prostatic spermine-binding protein (Sbp) from Rattus norvegicus (Rat).